Here is an 86-residue protein sequence, read N- to C-terminus: Serine protease inhibitor Kazal-type 2 (86 aa).

Residues methionine 1 to serine 16 form the signal peptide. The Kazal-like domain maps to glutamine 32–cysteine 86. Cystine bridges form between cysteine 38/cysteine 68, cysteine 46/cysteine 65, and cysteine 54/cysteine 86.

Its subcellular location is the secreted. The protein localises to the cytoplasmic vesicle. The protein resides in the secretory vesicle. It localises to the acrosome. Its function is as follows. As a strong inhibitor of acrosin, it is required for normal spermiogenesis. It probably hinders premature activation of proacrosin and other proteases, thus preventing the cascade of events leading to spermiogenesis defects. May be involved in the regulation of serine protease-dependent germ cell apoptosis. It also inhibits trypsin. The chain is Serine protease inhibitor Kazal-type 2 (Spink2) from Rattus norvegicus (Rat).